The sequence spans 298 residues: Ribosomal RNA small subunit methyltransferase A (298 aa).

Residues asparagine 35, leucine 37, glycine 62, glutamate 83, aspartate 108, and asparagine 133 each contribute to the S-adenosyl-L-methionine site.

This sequence belongs to the class I-like SAM-binding methyltransferase superfamily. rRNA adenine N(6)-methyltransferase family. RsmA subfamily.

The protein localises to the cytoplasm. The enzyme catalyses adenosine(1518)/adenosine(1519) in 16S rRNA + 4 S-adenosyl-L-methionine = N(6)-dimethyladenosine(1518)/N(6)-dimethyladenosine(1519) in 16S rRNA + 4 S-adenosyl-L-homocysteine + 4 H(+). Specifically dimethylates two adjacent adenosines (A1518 and A1519) in the loop of a conserved hairpin near the 3'-end of 16S rRNA in the 30S particle. May play a critical role in biogenesis of 30S subunits. The protein is Ribosomal RNA small subunit methyltransferase A of Streptococcus pyogenes serotype M4 (strain MGAS10750).